The sequence spans 212 residues: Imidazole glycerol phosphate synthase subunit HisH (212 aa).

The Glutamine amidotransferase type-1 domain occupies 3-211 (LIAVIDYDMG…VQQVQKLALV (209 aa)). The active-site Nucleophile is the Cys81. Residues His186 and Glu188 contribute to the active site.

As to quaternary structure, heterodimer of HisH and HisF.

The protein localises to the cytoplasm. It carries out the reaction 5-[(5-phospho-1-deoxy-D-ribulos-1-ylimino)methylamino]-1-(5-phospho-beta-D-ribosyl)imidazole-4-carboxamide + L-glutamine = D-erythro-1-(imidazol-4-yl)glycerol 3-phosphate + 5-amino-1-(5-phospho-beta-D-ribosyl)imidazole-4-carboxamide + L-glutamate + H(+). It catalyses the reaction L-glutamine + H2O = L-glutamate + NH4(+). The protein operates within amino-acid biosynthesis; L-histidine biosynthesis; L-histidine from 5-phospho-alpha-D-ribose 1-diphosphate: step 5/9. Functionally, IGPS catalyzes the conversion of PRFAR and glutamine to IGP, AICAR and glutamate. The HisH subunit catalyzes the hydrolysis of glutamine to glutamate and ammonia as part of the synthesis of IGP and AICAR. The resulting ammonia molecule is channeled to the active site of HisF. This is Imidazole glycerol phosphate synthase subunit HisH from Microcystis aeruginosa (strain NIES-843 / IAM M-2473).